We begin with the raw amino-acid sequence, 180 residues long: MEQKAVILDEQAIRRALTRIAHEMIERNKGMKDVILAGIKTRGIHLAKRLAERIEQIEGNPVIVGELDITLYRDDLTKKTDNQDPLVKGADIPADINDKTLIVVDDVLFTGRTVRAAMDALVDVGRPSSIQLAVLVDRGHRELPIRADYIGKNIPTSKAETVMVQLNEVDQNDLVAIYEK.

The PRPP-binding signature appears at 101-113 (LIVVDDVLFTGRT).

This sequence belongs to the purine/pyrimidine phosphoribosyltransferase family. PyrR subfamily. Homodimer and homohexamer; in equilibrium.

It carries out the reaction UMP + diphosphate = 5-phospho-alpha-D-ribose 1-diphosphate + uracil. Functionally, regulates transcriptional attenuation of the pyrimidine nucleotide (pyr) operon by binding in a uridine-dependent manner to specific sites on pyr mRNA. This disrupts an antiterminator hairpin in the RNA and favors formation of a downstream transcription terminator, leading to a reduced expression of downstream genes. Its function is as follows. Also displays a weak uracil phosphoribosyltransferase activity which is not physiologically significant. This is Bifunctional protein PyrR from Bacillus pumilus (strain SAFR-032).